The following is a 239-amino-acid chain: Putative transcriptional regulator of 2-aminoethylphosphonate degradation operons (239 aa).

Residues 8-76 enclose the HTH gntR-type domain; sequence IPQYLLIKAQ…DRRGWFVTPE (69 aa). The H-T-H motif DNA-binding region spans 36-55; that stretch reads ERELCAIFNTTRITIRESLA.

The sequence is that of Putative transcriptional regulator of 2-aminoethylphosphonate degradation operons (phnR) from Salmonella typhi.